The primary structure comprises 651 residues: DNA mismatch repair protein MutL (651 aa).

Residues Thr-383–Gln-405 form a disordered region.

It belongs to the DNA mismatch repair MutL/HexB family.

This protein is involved in the repair of mismatches in DNA. It is required for dam-dependent methyl-directed DNA mismatch repair. May act as a 'molecular matchmaker', a protein that promotes the formation of a stable complex between two or more DNA-binding proteins in an ATP-dependent manner without itself being part of a final effector complex. The chain is DNA mismatch repair protein MutL from Lacticaseibacillus casei (strain BL23) (Lactobacillus casei).